The chain runs to 141 residues: Lutropin subunit beta (141 aa).

An N-terminal signal peptide occupies residues 1–21; it reads MERYQELTVLLLLLLLEGGSG. Disulfide bonds link Cys-30–Cys-78, Cys-44–Cys-93, Cys-47–Cys-131, Cys-55–Cys-109, Cys-59–Cys-111, and Cys-114–Cys-121. A glycan (N-linked (GlcNAc...) asparagine) is linked at Asn-34.

It belongs to the glycoprotein hormones subunit beta family. In terms of assembly, heterodimer of a common alpha chain and a unique beta chain which confers biological specificity to thyrotropin, lutropin, follitropin and gonadotropin.

The protein resides in the secreted. Its function is as follows. Promotes spermatogenesis and ovulation by stimulating the testes and ovaries to synthesize steroids. The protein is Lutropin subunit beta (LHB) of Monodelphis domestica (Gray short-tailed opossum).